The following is a 381-amino-acid chain: V-type proton ATPase subunit C 1-B (381 aa).

The residue at position 2 (Thr2) is an N-acetylthreonine.

Belongs to the V-ATPase C subunit family. V-ATPase is a heteromultimeric enzyme made up of two complexes: the ATP-hydrolytic V1 complex and the proton translocation V0 complex. The V1 complex consists of three catalytic AB heterodimers that form a heterohexamer, three peripheral stalks each consisting of EG heterodimers, one central rotor including subunits D and F, and the regulatory subunits C and H. The proton translocation complex V0 consists of the proton transport subunit a, a ring of proteolipid subunits c9c'', rotary subunit d, subunits e and f, and two accessory subunits.

In terms of biological role, subunit of the V1 complex of vacuolar(H+)-ATPase (V-ATPase), a multisubunit enzyme composed of a peripheral complex (V1) that hydrolyzes ATP and a membrane integral complex (V0) that translocates protons. V-ATPase is responsible for acidifying and maintaining the pH of intracellular compartments and in some cell types, is targeted to the plasma membrane, where it is responsible for acidifying the extracellular environment. Subunit C is necessary for the assembly of the catalytic sector of the enzyme and is likely to have a specific function in its catalytic activity. This chain is V-type proton ATPase subunit C 1-B (atp6v1c1b), found in Danio rerio (Zebrafish).